A 375-amino-acid polypeptide reads, in one-letter code: 23S rRNA (uracil(747)-C(5))-methyltransferase RlmC (375 aa).

4 residues coordinate [4Fe-4S] cluster: cysteine 3, cysteine 11, cysteine 14, and cysteine 87. 4 residues coordinate S-adenosyl-L-methionine: glutamine 212, phenylalanine 241, glutamate 262, and asparagine 307. Cysteine 334 functions as the Nucleophile in the catalytic mechanism.

It belongs to the class I-like SAM-binding methyltransferase superfamily. RNA M5U methyltransferase family. RlmC subfamily.

It carries out the reaction uridine(747) in 23S rRNA + S-adenosyl-L-methionine = 5-methyluridine(747) in 23S rRNA + S-adenosyl-L-homocysteine + H(+). Its function is as follows. Catalyzes the formation of 5-methyl-uridine at position 747 (m5U747) in 23S rRNA. The chain is 23S rRNA (uracil(747)-C(5))-methyltransferase RlmC from Salmonella paratyphi A (strain ATCC 9150 / SARB42).